Consider the following 895-residue polypeptide: MTTLDHVIATHQSEWVSFSEEPLFPTPLEGGTEEHFPGLSSSSERSESSSGENHVVDEGSQDLSHSEQDDSSEKMGLISEAASPPGSPVQPTPDLASAISNWVQFEDDTPWSSTSPPHKETALTLTMPCWTCPSFDSLRRCPLTSESSWTTHSEDTSSPSVAPSYTDLQLINTEEQASGRASGTDSTDNSSSLQEDEEVEMEAISWWAGSPAMNGHPAAPPVTTARFPSWVTFEDNEVGCPSPPVPSPKKPNTPSAATAAPDVPFNSTGSFKRDRPKSTLMNLPKVQKLDISSLNRPPSVIEAPPWRATNPFLNETLQDVQPSPINPFSAFFEEQERRSQNSSVSSTTGKSQRDSLIVVYQDAISFDDSGKSQPHPDAIEKLKQLQIDDPDPVGNTALPDDDPTASVELDAPSPASALSQPRDGWPMMLRIPEKKNIMSSRHWGPIYIKLTASGYLQLYYEQGLEKPFREFKLEICHEVSEPRLQNYDENGRIHSLRIDRVTYKEKKKYQPKPAVAHAAEREQVIKLGTTNYDDFRSFIHAVQDRLMDLPVLSMDLSTVGLNYLEEEITVDVRDEFSGTVGKGDNQILQHHVLTRIHILSFLSGLAECRLGLNDILIKGNEIVSRQDIMPTTTTKWIKLHECRFHGCVDEDVFNSSRVILFNPLDACRFELMRFRTVFAEKTLPFTLRTAASINGAEVEVQSWLRMSPGFSSNRDPLTQVPCENVMVRYPVPSEWVKNFRRDSVLGEKSLKAKVNRGASFGSAGASGSEPVMRVTLGTAKYEHAFNSIVWRINRLPDKNSASGHPHCFFCHLELGSDREVPSRFANYVNVEFSMPTTSASKAAVRSVSVEDKPDVRKWVNYSAHYSYKVEIEQKKSLKPDFEGEDLENPKECGVQ.

Disordered regions lie at residues 15-119, 145-222, and 234-280; these read WVSF…PPHK, SESS…APPV, and EDNE…KSTL. A compositionally biased stretch (basic and acidic residues) spans 64–73; that stretch reads SHSEQDDSSE. Positions 145–193 are enriched in polar residues; that stretch reads SESSWTTHSEDTSSPSVAPSYTDLQLINTEEQASGRASGTDSTDNSSSL. The span at 241-251 shows a compositional bias: pro residues; it reads PSPPVPSPKKP. At T253 the chain carries Phosphothreonine. S278 and S299 each carry phosphoserine. Short sequence motifs (NPF) lie at residues 310–312 and 326–328; these read NPF. Residues 386–421 form a disordered region; that stretch reads QIDDPDPVGNTALPDDDPTASVELDAPSPASALSQP. The SHD domain maps to 424-557; sequence GWPMMLRIPE…DLPVLSMDLS (134 aa). An MHD domain is found at 565 to 872; sequence EEEITVDVRD…AHYSYKVEIE (308 aa). A Phosphoserine modification is found at S759.

The protein belongs to the Stoned B family. As to quaternary structure, interacts with the second C2 domain of synaptotagmins SYT1 and SYT2. Interacts with EPS15, EPS15R and ITSN1. Interacts indirectly with the AP-2 adapter complex. Interacts with TOR1A and COPS4; the interaction controls STON2 protein stability. Phosphorylated in vitro by PKD. Post-translationally, neddylated; deneddylated via its interaction with the COP9 signalosome (CSN) complex through TOR1A and COPS4. In terms of processing, ubiquitinated; leading to its degradation.

The protein localises to the cytoplasm. The protein resides in the membrane. Its subcellular location is the synapse. It localises to the synaptosome. Adapter protein involved in endocytic machinery. Involved in the synaptic vesicle recycling. May facilitate clathrin-coated vesicle uncoating. The polypeptide is Stonin-2 (Ston2) (Mus musculus (Mouse)).